We begin with the raw amino-acid sequence, 114 residues long: uncharacterized protein (114 aa).

2 helical membrane passes run 9–29 (LAIF…SFWL) and 75–95 (LVHF…VAII).

It localises to the cell membrane. This is an uncharacterized protein from Mycoplasma pneumoniae (strain ATCC 29342 / M129 / Subtype 1) (Mycoplasmoides pneumoniae).